The chain runs to 550 residues: Zinc finger protein squeeze (550 aa).

The segment covering 73–105 (QQQQQQQQQEMLQQQQQHQAHQEQQQQQQQQQQ) has biased composition (low complexity). Positions 73–179 (QQQQQQQQQE…GGGGGDGDQS (107 aa)) are disordered. Positions 106-117 (QHHHQQQQHHLK) are enriched in basic residues. Positions 141-156 (RSPQRPLMSSGSNASS) are enriched in polar residues. The segment covering 164-176 (SGGGPGGGGGGDG) has biased composition (gly residues). 5 consecutive C2H2-type zinc fingers follow at residues 182 to 204 (YKCA…TRIH), 210 to 232 (YRCE…IRTH), 238 to 262 (YKCR…SRCH), 268 to 290 (FKCN…IPKH), and 299 to 321 (HICN…LQKH). A disordered region spans residues 399-485 (LQQHQQQQQQ…VPPSHLQQHR (87 aa)). Residues 400–416 (QQHQQQQQQQQQDMLQQ) show a composition bias toward low complexity. Position 424 is a phosphothreonine (threonine 424). 2 positions are modified to phosphoserine: serine 428 and serine 430. Positions 444–460 (QTTPQHHLQQQQQQQQP) are enriched in low complexity. Phosphotyrosine is present on residues tyrosine 494 and tyrosine 496.

It belongs to the krueppel C2H2-type zinc-finger protein family. In terms of assembly, interacts with nab; which acts as a coactivator. Interacts with ap.

Its subcellular location is the nucleus. Its function is as follows. Transcription factor involved in neuronal fate specification. First required in embryonic CNS development to define the number of cells that express apterous (ap) in the ap thoracic cluster of interneurons. Later on, it plays a central role in the combinatorial code of transcription factors that specifies the fate of the Tv neuron in the ap cluster by participating in the transcription regulation of FMRFa in Tv cells. Also required for projection neuron dendritic targeting. In Drosophila pseudoobscura pseudoobscura (Fruit fly), this protein is Zinc finger protein squeeze (sqz).